Here is a 348-residue protein sequence, read N- to C-terminus: Nicotinate-nucleotide--dimethylbenzimidazole phosphoribosyltransferase (348 aa).

The active-site Proton acceptor is the Glu-316.

It belongs to the CobT family.

It catalyses the reaction 5,6-dimethylbenzimidazole + nicotinate beta-D-ribonucleotide = alpha-ribazole 5'-phosphate + nicotinate + H(+). Its pathway is nucleoside biosynthesis; alpha-ribazole biosynthesis; alpha-ribazole from 5,6-dimethylbenzimidazole: step 1/2. Catalyzes the synthesis of alpha-ribazole-5'-phosphate from nicotinate mononucleotide (NAMN) and 5,6-dimethylbenzimidazole (DMB). This chain is Nicotinate-nucleotide--dimethylbenzimidazole phosphoribosyltransferase, found in Xanthomonas euvesicatoria pv. vesicatoria (strain 85-10) (Xanthomonas campestris pv. vesicatoria).